The following is a 359-amino-acid chain: MVQACEGRSRAQLPTLSLGADMTQPPPTKAPAKKHVRLQERRGSSVALMLDVQSLGTVEPICSVNTPREVTLHFLRTAGHPLTRWTLQHQPPSPKQLEEEFLKIPSNFVNPEDLDIPGHASKDRYKTILPNPQSRVCLGRAQSQEDSDYINANYIRGYDGKEKVYIATQGPMPNTVADFWEMVWQEDVSLIVMLTQLREGKEKCVHYWPTEEEAYGPFQIRIQDMKEHPEYTVRQLTIQHQQECRSVKHILFSAWPDHQTPESAGPLLRLVAEVETPETAANSGPIVVHCSAGIGRTGCFIATRIGCQQLKARGEVDILGIVCQLRLDRGGMIQTAEQYQFLHHTLALYAAQLPPEPNP.

Positions 1–33 (MVQACEGRSRAQLPTLSLGADMTQPPPTKAPAK) are disordered. The interaction with MAP kinases stretch occupies residues 38–51 (LQERRGSSVALMLD). S44 bears the Phosphoserine mark. T66 is modified (phosphothreonine). A phosphoserine mark is found at S93 and S143. One can recognise a Tyrosine-protein phosphatase domain in the interval 97 to 349 (LEEEFLKIPS…QFLHHTLALY (253 aa)). Residues D257, 290-296 (CSAGIGR), and Q334 each bind substrate. Residue C290 is the Phosphocysteine intermediate of the active site. At C290 the chain carries Cysteine sulfenic acid (-SOH).

Belongs to the protein-tyrosine phosphatase family. Non-receptor class subfamily. In terms of processing, oxidized at active site cysteine. Treatment with pervanadate (vanadate and H(2)O(2)) or with antigen enhanced oxidation of active site cysteine. Expressed in bone marrow-derived mast cells.

It is found in the cytoplasm. The protein resides in the cytoskeleton. The catalysed reaction is O-phospho-L-tyrosyl-[protein] + H2O = L-tyrosyl-[protein] + phosphate. Inhibited upon FCER1A triggering. In terms of biological role, may play a role in the regulation of T and B-lymphocyte development and signal transduction. This Mus musculus (Mouse) protein is Tyrosine-protein phosphatase non-receptor type 7 (Ptpn7).